A 1412-amino-acid polypeptide reads, in one-letter code: Probable phosphatidylinositol 4-kinase STT4 homolog (1412 aa).

The PIK helical domain maps to S878 to I1055. A pleckstrin homology (PH) domain conferring phosphoinositide binding specificity region spans residues M1056–S1163. The 270-residue stretch at N1127–R1396 folds into the PI3K/PI4K catalytic domain. The G-loop stretch occupies residues L1133–V1139. The tract at residues N1266–N1274 is catalytic loop. The activation loop stretch occupies residues H1285–T1308.

The protein belongs to the PI3/PI4-kinase family. Type III PI4K subfamily.

The protein localises to the cytoplasm. The catalysed reaction is a 1,2-diacyl-sn-glycero-3-phospho-(1D-myo-inositol) + ATP = a 1,2-diacyl-sn-glycero-3-phospho-(1D-myo-inositol 4-phosphate) + ADP + H(+). Its function is as follows. Acts on phosphatidylinositol (PI) in the first committed step in the production of the second messenger inositol 1,4,5,-trisphosphate. The sequence is that of Probable phosphatidylinositol 4-kinase STT4 homolog (STT4) from Encephalitozoon cuniculi (strain GB-M1) (Microsporidian parasite).